A 328-amino-acid polypeptide reads, in one-letter code: Testis-specific serine/threonine-protein kinase 4 (328 aa).

Positions Tyr-25–Val-293 constitute a Protein kinase domain. ATP-binding positions include Ile-31–Val-39 and Lys-54. Asp-148 acts as the Proton acceptor in catalysis. Thr-197 carries the post-translational modification Phosphothreonine.

Belongs to the protein kinase superfamily. CAMK Ser/Thr protein kinase family. As to quaternary structure, homodimer. Interacts with HSP90; this interaction stabilizes and activates TSSK4. Interacts with ODF2 (via C-terminus); this interaction promotes ODF2 phosphorylation on 'Ser-95'. May interact with CREM. Interacts with CREB1; this interaction facilitates phosphorylation on 'Ser-133'. Interacts with QRICH2. Mg(2+) is required as a cofactor. Activated by autophosphorylation on Thr-197. ODF2 potentiates the autophosphorylation activity of TSSK4 at Thr-197. Post-translationally, ubiquitinated; HSP90 activity negatively regulates ubiquitination and degradation. Expressed only in the testis.

The protein localises to the cytoplasmic vesicle. Its subcellular location is the secretory vesicle. It localises to the acrosome. It is found in the cell projection. The protein resides in the cilium. The protein localises to the flagellum. The catalysed reaction is L-seryl-[protein] + ATP = O-phospho-L-seryl-[protein] + ADP + H(+). It carries out the reaction L-threonyl-[protein] + ATP = O-phospho-L-threonyl-[protein] + ADP + H(+). Activated by phosphorylation on Thr-197. Functionally, serine/threonine kinase which is involved in male germ cell development and in mature sperm function. May be involved in the Cre/Creb signaling pathway. Phosphorylates CREB1 on 'Ser-133' in vitro and can stimulate Cre/Creb pathway in cells. Phosphorylates CREM on 'Ser-116' in vitro. Phosphorylates ODF2 on 'Ser-95'. The sequence is that of Testis-specific serine/threonine-protein kinase 4 from Homo sapiens (Human).